A 437-amino-acid polypeptide reads, in one-letter code: MKPLIALVGRPNVGKSTLFNRILRQKSAIVDPTPGVTRDRHISPGEWQGKQFLLMDTGGYAPENDTLSKAMLEQTMRAIEDADAVIFIVDARSGLTYLDLDIAKILQKTFKDKKIFFVANKVDNPQVALEAQSLVKSGFTEPYLISARDGAGVADMLEDVLNSLPCPEGEEIEEDDSIKLAVLGRPNVGKSSLVNALLGTERHIVSDVPGTTRDAIDSVLKRNGEEYVLIDTAGLRKRTKIDAGIEFYSSLRTARAIERCDVALVLLDARLGLESQDMKIIHMAIERKKGVLILVNKWDLVEKDSKTSKAFTDNLQNQLGNIGYIPVIFTSALTKKNCYRAIDTAAEIALNRRQKISTSNLNRFLQETLTMRHPATKSGKELKIKYMTQIDSDHPVFAFFCNDPELLENNFRRFLEKRLRESFDFAGIPITMRFLRK.

EngA-type G domains are found at residues 3-168 (PLIA…PCPE) and 178-353 (IKLA…LNRR). GTP-binding positions include 9-16 (GRPNVGKS), 56-60 (DTGGY), 120-123 (NKVD), 184-191 (GRPNVGKS), 231-235 (DTAGL), and 296-299 (NKWD). One can recognise a KH-like domain in the interval 354 to 437 (QKISTSNLNR…IPITMRFLRK (84 aa)).

The protein belongs to the TRAFAC class TrmE-Era-EngA-EngB-Septin-like GTPase superfamily. EngA (Der) GTPase family. In terms of assembly, associates with the 50S ribosomal subunit.

GTPase that plays an essential role in the late steps of ribosome biogenesis. The protein is GTPase Der of Chlorobaculum tepidum (strain ATCC 49652 / DSM 12025 / NBRC 103806 / TLS) (Chlorobium tepidum).